A 310-amino-acid polypeptide reads, in one-letter code: Protein DOS2 (310 aa).

2 stretches are compositionally biased toward basic and acidic residues: residues 15-26 (DKISNSHTKETG) and 135-146 (SNDKDENSKENE). Disordered regions lie at residues 15–45 (DKISNSHTKETGSTENTENNELQSRDDKTNE) and 131–151 (AENDSNDKDENSKENEIAVGG). In terms of domain architecture, BSD spans 176–228 (QLDPFDVDEKTEEICSILQGDKDISKLMNDIVPHKISYKDFWHIYFLQRNKIL). The disordered stretch occupies residues 240–310 (KKEKETEEKE…KDDDDDDDWE (71 aa)). Residues 247–263 (EKEVEWDDEEEEEDDDK) show a composition bias toward acidic residues. Composition is skewed to basic and acidic residues over residues 264 to 276 (VEAVADNKSKGET) and 284 to 300 (GLKDVSDHVGLANKDES). Over residues 301–310 (KDDDDDDDWE) the composition is skewed to acidic residues.

Its function is as follows. Acts in ubiquitin metabolism and is necessary for the control of single-copy DNA replication. The polypeptide is Protein DOS2 (DOS2) (Saccharomyces cerevisiae (strain ATCC 204508 / S288c) (Baker's yeast)).